Here is a 1028-residue protein sequence, read N- to C-terminus: Exportin-T (1028 aa).

The protein belongs to the exportin family.

Its subcellular location is the nucleus. It is found in the cytoplasm. Functionally, tRNA nucleus export receptor which facilitates tRNA translocation across the nuclear pore complex. Involved in pre-tRNA splicing, probably by affecting the interaction of pre-tRNA with splicing endonuclease. In Aspergillus terreus (strain NIH 2624 / FGSC A1156), this protein is Exportin-T (los1).